The primary structure comprises 102 residues: Protein translation factor SUI1 homolog (102 aa).

This sequence belongs to the SUI1 family.

The sequence is that of Protein translation factor SUI1 homolog from Methanosarcina mazei (strain ATCC BAA-159 / DSM 3647 / Goe1 / Go1 / JCM 11833 / OCM 88) (Methanosarcina frisia).